Consider the following 134-residue polypeptide: Large ribosomal subunit protein eL32 (134 aa).

It belongs to the eukaryotic ribosomal protein eL32 family.

The protein is Large ribosomal subunit protein eL32 (RpL32) of Spodoptera frugiperda (Fall armyworm).